The following is a 496-amino-acid chain: Aspartyl/glutamyl-tRNA(Asn/Gln) amidotransferase subunit B (496 aa).

Residues 475 to 496 (TGGSADPSKVNTLLREQLEDKK) are disordered.

It belongs to the GatB/GatE family. GatB subfamily. As to quaternary structure, heterotrimer of A, B and C subunits.

It carries out the reaction L-glutamyl-tRNA(Gln) + L-glutamine + ATP + H2O = L-glutaminyl-tRNA(Gln) + L-glutamate + ADP + phosphate + H(+). The enzyme catalyses L-aspartyl-tRNA(Asn) + L-glutamine + ATP + H2O = L-asparaginyl-tRNA(Asn) + L-glutamate + ADP + phosphate + 2 H(+). Allows the formation of correctly charged Asn-tRNA(Asn) or Gln-tRNA(Gln) through the transamidation of misacylated Asp-tRNA(Asn) or Glu-tRNA(Gln) in organisms which lack either or both of asparaginyl-tRNA or glutaminyl-tRNA synthetases. The reaction takes place in the presence of glutamine and ATP through an activated phospho-Asp-tRNA(Asn) or phospho-Glu-tRNA(Gln). In Haloquadratum walsbyi (strain DSM 16790 / HBSQ001), this protein is Aspartyl/glutamyl-tRNA(Asn/Gln) amidotransferase subunit B.